The chain runs to 895 residues: Ras and Rab interactor 2 (895 aa).

The SH2 domain maps to 97–190 (WLQLSLSEEE…VLPFTLKLPY (94 aa)). Residues 284-361 (LSGGLKRPST…KPTPIPPPRL (78 aa)) are disordered. Over residues 306 to 315 (SPPPRPPPPA) the composition is skewed to pro residues. Over residues 328 to 338 (TETQTSMPETV) the composition is skewed to polar residues. Ser-366 carries the phosphoserine modification. 2 disordered regions span residues 373 to 442 (GAKT…SDSL) and 460 to 481 (SLEDYEGESDQETMAPPIKSKK). Residues 430-441 (SDMSISTSSSDS) show a composition bias toward low complexity. Position 501 is a phosphoserine (Ser-501). Phosphothreonine is present on Thr-509. One can recognise a VPS9 domain in the interval 618-757 (DGSWKQLKEN…IKNFQEEQAA (140 aa)). In terms of domain architecture, Ras-associating spans 787–878 (FQNYLRVAFQ…FHFVYKRIKN (92 aa)).

The protein belongs to the RIN (Ras interaction/interference) family. Homotetramer; probably composed of anti-parallel linkage of two parallel dimers. Interacts with Ras. Interacts with RAB5B, with a much higher affinity for GTP-bound activated RAB5B. Does not interact with other members of the Rab family. In terms of tissue distribution, widely expressed. Expressed in heart, kidney, lung placenta. Expressed at low level in skeletal muscle, spleen and peripheral blood.

Its subcellular location is the cytoplasm. Its function is as follows. Ras effector protein. May function as an upstream activator and/or downstream effector for RAB5B in endocytic pathway. May function as a guanine nucleotide exchange (GEF) of RAB5B, required for activating the RAB5 proteins by exchanging bound GDP for free GTP. This chain is Ras and Rab interactor 2 (RIN2), found in Homo sapiens (Human).